Consider the following 440-residue polypeptide: Chromosomal replication initiator protein DnaA (440 aa).

The segment at 1 to 69 is domain I, interacts with DnaA modulators; the sequence is MKERILQEIK…VKVVLGNDAT (69 aa). A domain II region spans residues 69–96; that stretch reads TFEITYEAFEPHSSYSEPLVKKRAVLLT. Residues 97–313 are domain III, AAA+ region; sequence PLNPDYTFEN…GAIIKLLVYK (217 aa). Residues valine 108, asparagine 113, glycine 140, leucine 141, glycine 142, lysine 143, threonine 144, histidine 145, and arginine 300 each contribute to the ADP site. An ATP-binding site is contributed by glycine 140. Residues glycine 142, lysine 143, and threonine 144 each coordinate ATP. Threonine 144 contributes to the Mg(2+) binding site. The domain IV, binds dsDNA stretch occupies residues 314-440; sequence ETTGKEVDLK…GEISRRALSG (127 aa).

Belongs to the DnaA family. Oligomerizes as a right-handed, spiral filament on DNA at oriC.

The protein localises to the cytoplasm. In terms of biological role, plays an essential role in the initiation and regulation of chromosomal replication. ATP-DnaA binds to the origin of replication (oriC) to initiate formation of the DNA replication initiation complex once per cell cycle. Binds the DnaA box (a 9 base pair repeat at the origin) and separates the double-stranded (ds)DNA. Forms a right-handed helical filament on oriC DNA; dsDNA binds to the exterior of the filament while single-stranded (ss)DNA is stabiized in the filament's interior. The ATP-DnaA-oriC complex binds and stabilizes one strand of the AT-rich DNA unwinding element (DUE), permitting loading of DNA polymerase. After initiation quickly degrades to an ADP-DnaA complex that is not apt for DNA replication. Binds acidic phospholipids. Its function is as follows. The DnaA box consensus is 5'-[ATC][AT]AC[CT]TACCA[CT][CTA]-3' in this bacterium. Mutagenesis of residues that line the central pore blocks dsDNA separation. The polypeptide is Chromosomal replication initiator protein DnaA (Thermotoga maritima (strain ATCC 43589 / DSM 3109 / JCM 10099 / NBRC 100826 / MSB8)).